Reading from the N-terminus, the 360-residue chain is UDP-N-acetylglucosamine--N-acetylmuramyl-(pentapeptide) pyrophosphoryl-undecaprenol N-acetylglucosamine transferase (360 aa).

UDP-N-acetyl-alpha-D-glucosamine contacts are provided by residues 12-14 (TAG), serine 198, and glutamine 289.

Belongs to the glycosyltransferase 28 family. MurG subfamily.

The protein localises to the cell membrane. It catalyses the reaction Mur2Ac(oyl-L-Ala-gamma-D-Glu-L-Lys-D-Ala-D-Ala)-di-trans,octa-cis-undecaprenyl diphosphate + UDP-N-acetyl-alpha-D-glucosamine = beta-D-GlcNAc-(1-&gt;4)-Mur2Ac(oyl-L-Ala-gamma-D-Glu-L-Lys-D-Ala-D-Ala)-di-trans,octa-cis-undecaprenyl diphosphate + UDP + H(+). The protein operates within cell wall biogenesis; peptidoglycan biosynthesis. Its function is as follows. Cell wall formation. Catalyzes the transfer of a GlcNAc subunit on undecaprenyl-pyrophosphoryl-MurNAc-pentapeptide (lipid intermediate I) to form undecaprenyl-pyrophosphoryl-MurNAc-(pentapeptide)GlcNAc (lipid intermediate II). The polypeptide is UDP-N-acetylglucosamine--N-acetylmuramyl-(pentapeptide) pyrophosphoryl-undecaprenol N-acetylglucosamine transferase (Streptococcus equi subsp. equi (strain 4047)).